The sequence spans 714 residues: Solute carrier family 12 member 8 (714 aa).

Transmembrane regions (helical) follow at residues 37 to 60 (VLFGTWDGVFTSCMINIFGVVLFL), 72 to 93 (LLGMFLVSFVILVALVTVLSGI), 99 to 116 (SSIGSGGVYSMISSVLGG), 123 to 142 (GLLYVFGQCVAGAMYITGFA), 154 to 173 (IWAVRGISVAVLLALLGINL), and 185 to 205 (LLLFLLAVSTLDFVVGSFTHL). The N-linked (GlcNAc...) asparagine glycan is linked to N221. Helical transmembrane passes span 233 to 254 (FFTVFGVFFPAATGVMAGFNMG), 266 to 289 (LGSLAAVGISWFLYIIFVFLLGAI), 309 to 331 (GFLFLLGLYISSLASCMGGLYGA), 360 to 377 (PVAAICLTSLVTMAFVFV), and 383 to 403 (LAPIVTINFMLTYVAVDYSYF). 2 disordered regions span residues 471-503 (KLESSQPRQGEGNRTPESQKRKSKKATKQTLQD) and 530-550 (GQESCWNKQTSKSEGTQPEGT). Over residues 533–548 (SCWNKQTSKSEGTQPE) the composition is skewed to polar residues. The next 2 membrane-spanning stretches (helical) occupy residues 593–616 (CNPWVSLLGAVGSLLIMFVIQWVY) and 622–643 (GVAAIVYFYIGRASPGLHLGSA).

The protein belongs to the SLC12A transporter family. As to expression, ubiquitous with very low level in normal skin.

Its subcellular location is the membrane. Cation/chloride cotransporter that may play a role in the control of keratinocyte proliferation. In Homo sapiens (Human), this protein is Solute carrier family 12 member 8 (SLC12A8).